Consider the following 100-residue polypeptide: NADH-quinone oxidoreductase subunit K (100 aa).

3 helical membrane-spanning segments follow: residues Leu-4 to Ile-24, Ile-29 to Phe-49, and Ile-60 to Val-80.

It belongs to the complex I subunit 4L family. NDH-1 is composed of 14 different subunits. Subunits NuoA, H, J, K, L, M, N constitute the membrane sector of the complex.

It is found in the cell inner membrane. The enzyme catalyses a quinone + NADH + 5 H(+)(in) = a quinol + NAD(+) + 4 H(+)(out). Functionally, NDH-1 shuttles electrons from NADH, via FMN and iron-sulfur (Fe-S) centers, to quinones in the respiratory chain. The immediate electron acceptor for the enzyme in this species is believed to be ubiquinone. Couples the redox reaction to proton translocation (for every two electrons transferred, four hydrogen ions are translocated across the cytoplasmic membrane), and thus conserves the redox energy in a proton gradient. The sequence is that of NADH-quinone oxidoreductase subunit K from Thermodesulfovibrio yellowstonii (strain ATCC 51303 / DSM 11347 / YP87).